The chain runs to 327 residues: D-alanine--D-alanine ligase (327 aa).

In terms of domain architecture, ATP-grasp spans 113–312 (KRLWMTHGLA…YEDFVLQVLA (200 aa)). 139–194 (VADLGLPLIVKPAREGSSIGLTKVTAADQMRAAFDKAAALDNDVIAETFVDGAELT) is a binding site for ATP. Mg(2+) contacts are provided by Asp266, Glu279, and Asn281.

This sequence belongs to the D-alanine--D-alanine ligase family. Mg(2+) serves as cofactor. It depends on Mn(2+) as a cofactor.

It localises to the cytoplasm. The catalysed reaction is 2 D-alanine + ATP = D-alanyl-D-alanine + ADP + phosphate + H(+). It participates in cell wall biogenesis; peptidoglycan biosynthesis. In terms of biological role, cell wall formation. The polypeptide is D-alanine--D-alanine ligase (Cupriavidus taiwanensis (strain DSM 17343 / BCRC 17206 / CCUG 44338 / CIP 107171 / LMG 19424 / R1) (Ralstonia taiwanensis (strain LMG 19424))).